Reading from the N-terminus, the 1040-residue chain is Multidrug resistance protein MdtB (1040 aa).

12 helical membrane passes run 16 to 36 (FIMR…AGII), 347 to 367 (LMMA…NIPA), 369 to 389 (IIPG…MVFL), 396 to 416 (LTLM…IVVI), 440 to 460 (IGFT…PLLF), 472 to 492 (FAIT…TLTP), 537 to 557 (WLTL…WVFI), 863 to 883 (LGST…VLGI), 888 to 908 (FIHP…ALLA), 911 to 931 (IAGS…IGIV), 968 to 988 (ILMT…STGV), and 998 to 1018 (IGMV…TPVI).

The protein belongs to the resistance-nodulation-cell division (RND) (TC 2.A.6) family. MdtB subfamily. As to quaternary structure, part of a tripartite efflux system composed of MdtA, MdtB and MdtC. MdtB forms a heteromultimer with MdtC.

It localises to the cell inner membrane. In terms of biological role, the MdtABC tripartite complex confers resistance against novobiocin and deoxycholate. In Escherichia coli O157:H7 (strain EC4115 / EHEC), this protein is Multidrug resistance protein MdtB.